Here is a 206-residue protein sequence, read N- to C-terminus: 2,3-bisphosphoglycerate-dependent phosphoglycerate mutase (206 aa).

Substrate is bound by residues 9 to 16 (RHGQSEWN), 22 to 23 (TG), Arg-61, 88 to 91 (ERDY), Lys-99, 115 to 116 (RR), and 159 to 160 (GN). The active-site Tele-phosphohistidine intermediate is the His-10. Glu-88 serves as the catalytic Proton donor/acceptor.

Belongs to the phosphoglycerate mutase family. BPG-dependent PGAM subfamily. As to quaternary structure, homodimer.

It carries out the reaction (2R)-2-phosphoglycerate = (2R)-3-phosphoglycerate. The protein operates within carbohydrate degradation; glycolysis; pyruvate from D-glyceraldehyde 3-phosphate: step 3/5. Functionally, catalyzes the interconversion of 2-phosphoglycerate and 3-phosphoglycerate. The chain is 2,3-bisphosphoglycerate-dependent phosphoglycerate mutase from Bartonella bacilliformis (strain ATCC 35685 / KC583 / Herrer 020/F12,63).